Consider the following 152-residue polypeptide: FMN reductase (NADH) RutF (152 aa).

The protein belongs to the non-flavoprotein flavin reductase family. RutF subfamily.

It carries out the reaction FMNH2 + NAD(+) = FMN + NADH + 2 H(+). Its function is as follows. Catalyzes the reduction of FMN to FMNH2 which is used to reduce pyrimidine by RutA via the Rut pathway. The protein is FMN reductase (NADH) RutF of Shigella dysenteriae serotype 1 (strain Sd197).